The following is a 238-amino-acid chain: MSDVTTAEFNEDGKYIRKIRSFVLREGRLTKGQSQAIEAHWPAMGLDYTPQALELTQVFGRDADTVLEIGFGMGASLVQMAKAAPEQNFIGIEVHKPGIGTCLSEAGAAEVTNLRVYHHDAMEVLEHSIVDGSLERVQLFFPDPWHKKRHHKRRIVQAEFVQLIRRKLKIGGVFHMATDWENYSEHMLEIMNAAEGYKNQSTTGTVVERPEHRPLTKFEARGHRLGHGVWDIMFERTA.

S-adenosyl-L-methionine-binding residues include Glu68, Glu93, Asp120, and Asp143. The active site involves Asp143. Residues Lys147, Asp179, and 216–219 each bind substrate; that span reads TKFE.

The protein belongs to the class I-like SAM-binding methyltransferase superfamily. TrmB family.

The catalysed reaction is guanosine(46) in tRNA + S-adenosyl-L-methionine = N(7)-methylguanosine(46) in tRNA + S-adenosyl-L-homocysteine. It participates in tRNA modification; N(7)-methylguanine-tRNA biosynthesis. In terms of biological role, catalyzes the formation of N(7)-methylguanine at position 46 (m7G46) in tRNA. The protein is tRNA (guanine-N(7)-)-methyltransferase of Shewanella frigidimarina (strain NCIMB 400).